The chain runs to 498 residues: NADPH:adrenodoxin oxidoreductase, mitochondrial (498 aa).

Residues M1 to T37 constitute a mitochondrion transit peptide. FAD-binding residues include A54, E75, L83, and V119. NADP(+) contacts are provided by residues Q190–V193, R234–R235, and E246. Residues W404 and G411–I413 contribute to the FAD site. G411 lines the NADP(+) pocket. Residues D469 to D488 are compositionally biased toward basic and acidic residues. The interval D469–V489 is disordered.

Belongs to the ferredoxin--NADP reductase type 1 family. Requires FAD as cofactor.

Its subcellular location is the mitochondrion inner membrane. The enzyme catalyses 2 reduced [adrenodoxin] + NADP(+) + H(+) = 2 oxidized [adrenodoxin] + NADPH. Its pathway is steroid metabolism; cholesterol metabolism. In terms of biological role, serves as the first electron transfer protein in all the mitochondrial P450 systems including cholesterol side chain cleavage in all steroidogenic tissues, steroid 11-beta hydroxylation in the adrenal cortex, 25-OH-vitamin D3-24 hydroxylation in the kidney, and sterol C-27 hydroxylation in the liver. In Salvelinus fontinalis (Brook trout), this protein is NADPH:adrenodoxin oxidoreductase, mitochondrial (fdxr).